A 909-amino-acid chain; its full sequence is Glucan endo-1,3-beta-D-glucosidase ARB_01444 (909 aa).

Positions 1 to 23 (MKPYTTLPGVAVLVSLLTQSAHA) are cleaved as a signal peptide. The interval 136-187 (KRSPAPQRHPPAPTKATAGYQFTNCTSTSNPGPTATSPTSGIPSQPSAPPAT) is disordered. A compositionally biased stretch (polar residues) spans 155 to 180 (YQFTNCTSTSNPGPTATSPTSGIPSQ). N159, N239, and N259 each carry an N-linked (GlcNAc...) asparagine glycan. The tract at residues 191–430 (QDIFQPIAKD…KGVIQVAKNP (240 aa)) is beta-sandwich subdomain. Residues 191 to 909 (QDIFQPIAKD…AGEYSTYIAL (719 aa)) enclose the GH81 domain. Residues 431 to 524 (SAEEGEGIYD…GDSWTMVEGN (94 aa)) are alpha/beta subdomain. The tract at residues 539 to 909 (SSQVTLSEGA…AGEYSTYIAL (371 aa)) is (alpha/beta)6 barrel subdomain. D654 is an active-site residue. Residues H658, D727, E729, and E733 each coordinate (1,3-beta-D-glucosyl)n. Catalysis depends on residues E729 and E733. Positions 798–800 (KID) are may provide specificity for triple-helical beta-glucan. (1,3-beta-D-glucosyl)n is bound at residue Y811.

Belongs to the glycosyl hydrolase 81 family.

The protein localises to the secreted. Its subcellular location is the cell wall. It carries out the reaction Hydrolysis of (1-&gt;3)-beta-D-glucosidic linkages in (1-&gt;3)-beta-D-glucans.. Its function is as follows. Cleaves internal linkages in 1,3-beta-glucan. Probably involved in cell separation after cytokinesis. The polypeptide is Glucan endo-1,3-beta-D-glucosidase ARB_01444 (Arthroderma benhamiae (strain ATCC MYA-4681 / CBS 112371) (Trichophyton mentagrophytes)).